A 346-amino-acid chain; its full sequence is Protein STAR1 (346 aa).

The tract at residues 23 to 48 is disordered; the sequence is QRPPPNGTVHACSKSRPPQLEPGKVG. The ABC transporter domain occupies 112 to 344; sequence IRVRGLTRRS…KHPMARRFLE (233 aa). Residue 146 to 153 participates in ATP binding; sequence GPSGSGKS.

Belongs to the ABC transporter superfamily. ABCI family. In terms of assembly, interacts with STAR2. As to expression, expressed in roots.

The protein localises to the membrane. In terms of biological role, associates with STAR2 to form a functional transmembrane ABC transporter required for detoxification of aluminum (Al) in roots. Can specifically transport UDP-glucose. The polypeptide is Protein STAR1 (Oryza sativa subsp. japonica (Rice)).